A 236-amino-acid polypeptide reads, in one-letter code: Acetate--CoA ligase [ADP-forming] II subunit beta (236 aa).

The ATP-grasp domain maps to 26-62 (KQVLKAYGLPVPEEKLAKTLDEALKYAEEIGYPVAMK). Residue 52-63 (AEEIGYPVAMKL) participates in ATP binding.

The protein belongs to the acetate CoA ligase beta subunit family. As to quaternary structure, heterotetramer of two alpha and two beta subunits.

It catalyses the reaction acetate + ATP + CoA = acetyl-CoA + ADP + phosphate. Catalyzes the reversible formation of acetate and ATP from acetyl-CoA by using ADP and phosphate. Can use other substrates such as phenylacetyl-CoA, indoleacetyl-CoA and isobutyryl-CoA, but not succinyl-CoA. Seems to be involved primarily in the degradation of aryl-CoA esters to the corresponding acids. Participates in the conversion of acetyl-CoA to acetate and in the degradation of branched-chain amino acids via branched-chain-acyl-CoA esters. The protein is Acetate--CoA ligase [ADP-forming] II subunit beta of Pyrococcus furiosus (strain ATCC 43587 / DSM 3638 / JCM 8422 / Vc1).